We begin with the raw amino-acid sequence, 231 residues long: tRNA (guanine-N(1)-)-methyltransferase (231 aa).

S-adenosyl-L-methionine-binding positions include Gly114 and 134-139 (IGDYVL).

Belongs to the RNA methyltransferase TrmD family. In terms of assembly, homodimer.

It is found in the cytoplasm. The enzyme catalyses guanosine(37) in tRNA + S-adenosyl-L-methionine = N(1)-methylguanosine(37) in tRNA + S-adenosyl-L-homocysteine + H(+). Specifically methylates guanosine-37 in various tRNAs. The chain is tRNA (guanine-N(1)-)-methyltransferase from Clostridioides difficile (strain 630) (Peptoclostridium difficile).